The chain runs to 190 residues: Translation initiation factor IF-3 (190 aa).

Positions Gln-159–Glu-190 are disordered.

The protein belongs to the IF-3 family. In terms of assembly, monomer.

The protein resides in the cytoplasm. Its function is as follows. IF-3 binds to the 30S ribosomal subunit and shifts the equilibrium between 70S ribosomes and their 50S and 30S subunits in favor of the free subunits, thus enhancing the availability of 30S subunits on which protein synthesis initiation begins. This is Translation initiation factor IF-3 from Prochlorococcus marinus (strain MIT 9215).